Consider the following 668-residue polypeptide: MAP kinase kinase PBS2 (668 aa).

Positions 1 to 15 (MEDKFANLSLHEKTG) are enriched in basic and acidic residues. Disordered regions lie at residues 1–43 (MEDK…SSHY), 61–120 (RALK…ASSK), and 181–313 (NPNR…GSSG). Composition is skewed to polar residues over residues 16-43 (KSSIQLNEQTGSDNGSAVKRTSSTSSHY), 68-91 (SVGSNQSEQDKGSSQSPKHIQQIV), and 104-120 (SKVSQRMSSQVVQASSK). S68 bears the Phosphoserine mark. Residues 239–250 (AQQPQQFAPSPS) are compositionally biased toward low complexity. S269 bears the Phosphoserine mark. Polar residues predominate over residues 270-300 (NPGSLINGVQSTSTSSSTEGPHDTVGTTPRT). Residues 301–310 (GNSNNSSNSG) show a composition bias toward low complexity. In terms of domain architecture, Protein kinase spans 360-623 (LEFLDELGHG…YAALTEHPWL (264 aa)). ATP contacts are provided by residues 366-374 (LGHGNYGNV) and K389. D485 acts as the Proton acceptor in catalysis. The residue at position 514 (S514) is a Phosphoserine. Residue T518 is modified to Phosphothreonine.

This sequence belongs to the protein kinase superfamily. STE Ser/Thr protein kinase family. MAP kinase kinase subfamily. As to quaternary structure, interacts with NBP2, PTC1, SHO1 and STE11. Post-translationally, activated by phosphorylation by SSK2 or SSK22. Ser/Thr phosphorylation is also necessary for SHO1-mediated activation.

It is found in the cytoplasm. The enzyme catalyses L-seryl-[protein] + ATP = O-phospho-L-seryl-[protein] + ADP + H(+). It carries out the reaction L-threonyl-[protein] + ATP = O-phospho-L-threonyl-[protein] + ADP + H(+). It catalyses the reaction L-tyrosyl-[protein] + ATP = O-phospho-L-tyrosyl-[protein] + ADP + H(+). Functionally, kinase involved in a signal transduction pathway that is activated by changes in the osmolarity of the extracellular environment. Activates the MAP kinase HOG1 by concomitant phosphorylation at 'Thr-174' and 'Tyr-176'. In Saccharomyces cerevisiae (strain ATCC 204508 / S288c) (Baker's yeast), this protein is MAP kinase kinase PBS2 (PBS2).